We begin with the raw amino-acid sequence, 406 residues long: 1H-pyrrole-2-carbonyl-[peptidyl-carrier protein] brominase (406 aa).

FAD contacts are provided by Ala17, Glu36, Arg42, His44, Ile45, Ser48, Arg101, Val124, Asp291, and Val304.

It belongs to the flavin-dependent halogenase family.

It carries out the reaction (1H-pyrrole-2-carbonyl)-[peptidyl-carrier protein] + 3 bromide + 3 FADH2 + 3 O2 = (3,4,5-tribromo-1H-pyrrole-2-carbonyl)-[peptidyl-carrier protein] + 3 FAD + 6 H2O. The catalysed reaction is (1H-pyrrole-2-carbonyl)-[peptidyl-carrier protein] + bromide + FADH2 + O2 = (5-bromo-1H-pyrrole-2-carbonyl)-[peptidyl-carrier protein] + FAD + 2 H2O. It catalyses the reaction (5-bromo-1H-pyrrole-2-carbonyl)-[peptidyl-carrier protein] + bromide + FADH2 + O2 = (4,5-dibromo-1H-pyrrole-2-carbonyl)-[peptidyl-carrier protein] + FAD + 2 H2O. The enzyme catalyses (4,5-dibromo-1H-pyrrole-2-carbonyl)-[peptidyl-carrier protein] + bromide + FADH2 + O2 = (3,4,5-tribromo-1H-pyrrole-2-carbonyl)-[peptidyl-carrier protein] + FAD + 2 H2O. In terms of biological role, brominase involved in the biosynthesis of polybrominated aromatic organic compounds. Catalyzes three successive rounds of bromination of pyrrolyl-S-Bmp1 to produce mono-, di- and tribromopyrrolyl-S-Bmp1. The chain is 1H-pyrrole-2-carbonyl-[peptidyl-carrier protein] brominase from Pseudoalteromonas luteoviolacea (strain 2ta16).